We begin with the raw amino-acid sequence, 173 residues long: Glycine cleavage system H protein, mitochondrial (173 aa).

A mitochondrion-targeting transit peptide spans 1 to 48; the sequence is MALRVVRSVRALLCTLRAVPSPAAPCPPRPWQLGVGAVRTLRTGPALL. Residues 66-148 enclose the Lipoyl-binding domain; that stretch reads IGTVGISNFA…YEDGWLIKMT (83 aa). The residue at position 107 (Lys-107) is an N6-lipoyllysine.

It belongs to the GcvH family. In terms of assembly, interacts with GLDC. The glycine cleavage system is composed of four proteins: P (GLDC), T (GCST), L (DLD) and H (GCSH). The cofactor is (R)-lipoate.

The protein localises to the mitochondrion. Its function is as follows. The glycine cleavage system catalyzes the degradation of glycine. The H protein (GCSH) shuttles the methylamine group of glycine from the P protein (GLDC) to the T protein (GCST). Has a pivotal role in the lipoylation of enzymes involved in cellular energetics such as the mitochondrial dihydrolipoyllysine-residue acetyltransferase component of pyruvate dehydrogenase complex (DLAT), and the mitochondrial dihydrolipoyllysine-residue succinyltransferase component of 2-oxoglutarate dehydrogenase complex (DLST). The chain is Glycine cleavage system H protein, mitochondrial from Homo sapiens (Human).